The chain runs to 145 residues: Antiholin-like protein LrgA (145 aa).

Helical transmembrane passes span 13–30 (FFHQ…SKII), 40–62 (GSVI…LGEV), 69–91 (LTNN…LGVI), and 95–117 (PFLI…GYVT).

Belongs to the CidA/LrgA family. LrgA subfamily.

The protein resides in the cell membrane. Functionally, inhibits the expression or activity of extracellular murein hydrolases by interacting, possibly with LrgB, with the holin-like proteins CidA and/or CidB. The LrgAB and CidAB proteins may affect the proton motive force of the membrane. May be involved in programmed cell death (PCD), possibly triggering PCD in response to antibiotics and environmental stresses. This Staphylococcus aureus (strain MW2) protein is Antiholin-like protein LrgA.